The chain runs to 1105 residues: Integrator complex subunit 2 (1105 aa).

Residues 822–842 (FVFCSPYLLMILLRILKGSLA) form a helical membrane-spanning segment.

Belongs to the Integrator subunit 2 family. In terms of assembly, belongs to the multiprotein complex Integrator, at least composed of IntS1, IntS2, IntS3, IntS4, omd/IntS5, IntS6, defl/IntS7, IntS8, IntS9, IntS10, IntS11, IntS12, asun/IntS13, IntS14 and IntS15. The core complex associates with protein phosphatase 2A subunits mts/PP2A and Pp2A-29B, to form the Integrator-PP2A (INTAC) complex.

Its subcellular location is the nucleus membrane. It is found in the nucleus. Component of the integrator complex, a multiprotein complex that terminates RNA polymerase II (Pol II) transcription in the promoter-proximal region of genes. The integrator complex provides a quality checkpoint during transcription elongation by driving premature transcription termination of transcripts that are unfavorably configured for transcriptional elongation: the complex terminates transcription by (1) catalyzing dephosphorylation of the C-terminal domain (CTD) of Pol II subunit Polr2A/Rbp1 and Spt5, and (2) degrading the exiting nascent RNA transcript via endonuclease activity. The integrator complex is also involved in the 3'-end processing of the U7 snRNA, and also the spliceosomal snRNAs U1, U2, U4 and U5. This Drosophila melanogaster (Fruit fly) protein is Integrator complex subunit 2.